The sequence spans 220 residues: Adenylate kinase (220 aa).

Position 10 to 15 (10 to 15) interacts with ATP; it reads GSGKST. The tract at residues 30–59 is NMP; that stretch reads ASGDIIRAEIKARTPLGIEMERYLSRGDLI. Residues Arg-36, 57 to 59, 83 to 86, and Gln-90 each bind AMP; these read DLI and GYPR. The interval 124–161 is LID; sequence GRRICSKCGAVYHVEFNPPKVPGKCDICGGELIQRPDD. Residue Arg-125 participates in ATP binding. Zn(2+) is bound by residues Cys-128 and Cys-131. 134 to 135 provides a ligand contact to ATP; that stretch reads VY. Zn(2+)-binding residues include Cys-148 and Cys-151. AMP is bound by residues Arg-158 and Arg-169. Gly-197 provides a ligand contact to ATP.

The protein belongs to the adenylate kinase family. Monomer.

Its subcellular location is the cytoplasm. The catalysed reaction is AMP + ATP = 2 ADP. The protein operates within purine metabolism; AMP biosynthesis via salvage pathway; AMP from ADP: step 1/1. Its function is as follows. Catalyzes the reversible transfer of the terminal phosphate group between ATP and AMP. Plays an important role in cellular energy homeostasis and in adenine nucleotide metabolism. The protein is Adenylate kinase of Pyrococcus abyssi (strain GE5 / Orsay).